Consider the following 164-residue polypeptide: LWamide neuropeptides (164 aa).

Positions 1–6 (RSADAQ) are excised as a propeptide. The tract at residues 1–92 (RSADAQQHGL…WGRSADAQQP (92 aa)) is disordered. 2 positions are modified to tryptophan amide: Trp11 and Trp20. The propeptide occupies 23–27 (SADAQ). 2 positions are modified to tryptophan amide: Trp32 and Trp41. A propeptide spanning residues 44–49 (SAEPGQ) is cleaved from the precursor. Tryptophan amide is present on residues Trp53 and Trp62. A propeptide spanning residues 65-70 (SAEPLQ) is cleaved from the precursor. Trp74 and Trp83 each carry tryptophan amide. Residues 86–90 (SADAQ) constitute a propeptide that is removed on maturation. A tryptophan amide mark is found at Trp95, Trp106, and Trp115. Residues 118-123 (SADPGQ) constitute a propeptide that is removed on maturation. Tryptophan amide is present on residues Trp127 and Trp137. A propeptide spanning residues 140–164 (SYEPPQFEDLEDLKKKSAIPKPSEQ) is cleaved from the precursor.

It belongs to the LWamide neuropeptide family.

It localises to the secreted. Its function is as follows. Metamorphosin A may be part of an internal signaling system involved in control of metamorphosis. This chain is LWamide neuropeptides, found in Actinia equina (Beadlet anemone).